Here is a 168-residue protein sequence, read N- to C-terminus: ATP synthase subunit b (168 aa).

A helical membrane pass occupies residues 9 to 29; it reads AIPFGTIAYTLVVFLILLVML.

It belongs to the ATPase B chain family. F-type ATPases have 2 components, F(1) - the catalytic core - and F(0) - the membrane proton channel. F(1) has five subunits: alpha(3), beta(3), gamma(1), delta(1), epsilon(1). F(0) has three main subunits: a(1), b(2) and c(10-14). The alpha and beta chains form an alternating ring which encloses part of the gamma chain. F(1) is attached to F(0) by a central stalk formed by the gamma and epsilon chains, while a peripheral stalk is formed by the delta and b chains.

Its subcellular location is the cell membrane. Its function is as follows. F(1)F(0) ATP synthase produces ATP from ADP in the presence of a proton or sodium gradient. F-type ATPases consist of two structural domains, F(1) containing the extramembraneous catalytic core and F(0) containing the membrane proton channel, linked together by a central stalk and a peripheral stalk. During catalysis, ATP synthesis in the catalytic domain of F(1) is coupled via a rotary mechanism of the central stalk subunits to proton translocation. Functionally, component of the F(0) channel, it forms part of the peripheral stalk, linking F(1) to F(0). In Bacillus cytotoxicus (strain DSM 22905 / CIP 110041 / 391-98 / NVH 391-98), this protein is ATP synthase subunit b.